A 473-amino-acid polypeptide reads, in one-letter code: M-phase inducer phosphatase 3 (473 aa).

The segment at 1–23 is disordered; that stretch reads MSTELFSSTREEGSSGSGPSFRS. Position 2 is an N-acetylserine (S2). 2 positions are modified to phosphoserine: S20 and S38. At T48 the chain carries Phosphothreonine. Phosphoserine is present on residues S57, S61, and S64. At T67 the chain carries Phosphothreonine. S122 carries the phosphoserine; by CDK1 modification. Phosphoserine is present on S129. Position 130 is a phosphothreonine (T130). A disordered region spans residues 132–158; that stretch reads NGLDRGHRKRDAMCSSSANKENDNGNL. Over residues 145-158 the composition is skewed to polar residues; it reads CSSSANKENDNGNL. S168 is modified (phosphoserine). Residues S191 and S198 each carry the phosphoserine; by PLK3 modification. S214 is subject to Phosphoserine; by CDK1. S216 carries the phosphoserine; by CHEK1, CHEK2, BRSK1, MAPK14 AND MARK3 modification. Residues 321–428 form the Rhodanese domain; it reads LIEKFYVIDC…FFPEYMELCE (108 aa). Positions 334–379 are HIV-1 Vpr binding site; it reads YEYLGGHIQGALNLYSQEELFNFFLKKPIVPLDTQKRIIIVFHCEF. C377 is a catalytic residue. S472 carries the post-translational modification Phosphoserine.

It belongs to the MPI phosphatase family. As to quaternary structure, interacts with MAPK14 and 14-3-3 proteins. When phosphorylated on Ser-129 and/or Thr-130, interacts with PLK1. Interacts with MARK3/C-TAK1. (Microbial infection) Interacts with HIV-1 Vpr; this interaction inactivates CDC25C phosphatase activity. In terms of processing, phosphorylated by CHEK1 and MAPK14 at Ser-216. This phosphorylation creates a binding site for 14-3-3 protein and inhibits the phosphatase. Phosphorylated by PLK4. Phosphorylated by PLK1, leading to activate the phosphatase activity. Phosphorylation by PLK3 at Ser-191 promotes nuclear translocation. Ser-198 is a minor phosphorylation site. Was initially reported to be phosphorylated by PLK3 at Ser-216. However, such phosphorylation by PLK3 was not confirmed by other groups. Phosphorylation at Thr-48, Thr-67, Ser-122, Thr-130, Ser-168 and Ser-214 occurs at G2 and G2-M transition and is probably catalyzed by CDK1. Ser-168 phosphorylation levels are lower than those at the other 5 CDK1 sites. Phosphorylation by CDK1 leads to increased activity.

The protein resides in the nucleus. It catalyses the reaction O-phospho-L-tyrosyl-[protein] + H2O = L-tyrosyl-[protein] + phosphate. Functionally, functions as a dosage-dependent inducer in mitotic control. Tyrosine protein phosphatase required for progression of the cell cycle. When phosphorylated, highly effective in activating G2 cells into prophase. Directly dephosphorylates CDK1 and activates its kinase activity. This is M-phase inducer phosphatase 3 (CDC25C) from Homo sapiens (Human).